A 412-amino-acid chain; its full sequence is Serine hydroxymethyltransferase (412 aa).

Residues Leu-117 and 121–123 (GHL) contribute to the (6S)-5,6,7,8-tetrahydrofolate site. Lys-226 is modified (N6-(pyridoxal phosphate)lysine). (6S)-5,6,7,8-tetrahydrofolate contacts are provided by residues Glu-242 and 350 to 352 (SPF).

The protein belongs to the SHMT family. Homodimer. It depends on pyridoxal 5'-phosphate as a cofactor.

The protein localises to the cytoplasm. The enzyme catalyses (6R)-5,10-methylene-5,6,7,8-tetrahydrofolate + glycine + H2O = (6S)-5,6,7,8-tetrahydrofolate + L-serine. It participates in one-carbon metabolism; tetrahydrofolate interconversion. Its pathway is amino-acid biosynthesis; glycine biosynthesis; glycine from L-serine: step 1/1. Its function is as follows. Catalyzes the reversible interconversion of serine and glycine with tetrahydrofolate (THF) serving as the one-carbon carrier. Also exhibits THF-independent aldolase activity toward beta-hydroxyamino acids, producing glycine and aldehydes, via a retro-aldol mechanism. This is Serine hydroxymethyltransferase from Methanosarcina acetivorans (strain ATCC 35395 / DSM 2834 / JCM 12185 / C2A).